Here is a 150-residue protein sequence, read N- to C-terminus: Large ribosomal subunit protein bL9 (150 aa).

The protein belongs to the bacterial ribosomal protein bL9 family.

Binds to the 23S rRNA. This is Large ribosomal subunit protein bL9 from Burkholderia thailandensis (strain ATCC 700388 / DSM 13276 / CCUG 48851 / CIP 106301 / E264).